Here is a 341-residue protein sequence, read N- to C-terminus: HTH-type transcriptional repressor PurR (341 aa).

The HTH lacI-type domain occupies 2–56 (ATIKDVAKRAGVSTTTVSHVINKTRFVAEETKAAVGAAIKELHYSPSAVARSLKV). Positions 4-23 (IKDVAKRAGVSTTTVSHVIN) form a DNA-binding region, H-T-H motif. A DNA-binding region spans residues 48–56 (SAVARSLKV). Hypoxanthine-binding residues include tyrosine 73, arginine 190, threonine 192, phenylalanine 221, and aspartate 275.

Homodimer.

It participates in purine metabolism; purine nucleotide biosynthesis [regulation]. Is the main repressor of the genes involved in the de novo synthesis of purine nucleotides, regulating purB, purC, purEK, purF, purHD, purL, purMN and guaBA expression. PurR is allosterically activated to bind its cognate DNA by binding the purine corepressors, hypoxanthine or guanine, thereby effecting transcription repression. The chain is HTH-type transcriptional repressor PurR from Serratia proteamaculans (strain 568).